Reading from the N-terminus, the 557-residue chain is Dihydroxy-acid dehydratase (557 aa).

Residue Cys47 coordinates [2Fe-2S] cluster. A Mg(2+)-binding site is contributed by Asp79. Cys120 lines the [2Fe-2S] cluster pocket. Residues Asp121 and Lys122 each coordinate Mg(2+). Lys122 is subject to N6-carboxylysine. Cys192 serves as a coordination point for [2Fe-2S] cluster. A Mg(2+)-binding site is contributed by Glu444. Ser470 serves as the catalytic Proton acceptor.

This sequence belongs to the IlvD/Edd family. In terms of assembly, homodimer. [2Fe-2S] cluster serves as cofactor. Requires Mg(2+) as cofactor.

It carries out the reaction (2R)-2,3-dihydroxy-3-methylbutanoate = 3-methyl-2-oxobutanoate + H2O. The catalysed reaction is (2R,3R)-2,3-dihydroxy-3-methylpentanoate = (S)-3-methyl-2-oxopentanoate + H2O. Its pathway is amino-acid biosynthesis; L-isoleucine biosynthesis; L-isoleucine from 2-oxobutanoate: step 3/4. It participates in amino-acid biosynthesis; L-valine biosynthesis; L-valine from pyruvate: step 3/4. Its function is as follows. Functions in the biosynthesis of branched-chain amino acids. Catalyzes the dehydration of (2R,3R)-2,3-dihydroxy-3-methylpentanoate (2,3-dihydroxy-3-methylvalerate) into 2-oxo-3-methylpentanoate (2-oxo-3-methylvalerate) and of (2R)-2,3-dihydroxy-3-methylbutanoate (2,3-dihydroxyisovalerate) into 2-oxo-3-methylbutanoate (2-oxoisovalerate), the penultimate precursor to L-isoleucine and L-valine, respectively. The chain is Dihydroxy-acid dehydratase from Parasynechococcus marenigrum (strain WH8102).